The chain runs to 463 residues: Xanthone prenyltransferase B (463 aa).

This sequence belongs to the tryptophan dimethylallyltransferase family.

It functions in the pathway secondary metabolite biosynthesis. Mn(2+) and Co(2+) strongly enhance prenylation activity. In terms of biological role, dehydrogenase involved in the conversion of monodictyphenone to the prenyl xanthones such as emericellin, shamixanthone and epishamixanthone. Monodictyphenone is first converted to variecoxanthone A via a paeciloxanthone intermediate by the consecutive actions of the FAD-dependent monooxygenase mdpD and the xanthone prenyltransferase xptB. XptB catalyzes regular O-prenylation at the hydroxy group of C-7 of the xanthone ring. Variecoxanthone A is further prenylated to emericellin by xptA before being reduced to shamixanthone and epishamixanthone by the dehydrogenase xptC. The polypeptide is Xanthone prenyltransferase B (Emericella nidulans (strain FGSC A4 / ATCC 38163 / CBS 112.46 / NRRL 194 / M139) (Aspergillus nidulans)).